A 210-amino-acid polypeptide reads, in one-letter code: Probable GTP-binding protein EngB (210 aa).

One can recognise an EngB-type G domain in the interval 25–199 (TGIEVAFAGR…RQKLDTWFSE (175 aa)). GTP-binding positions include 33–40 (GRSNAGKS), 60–64 (GRTQL), 78–81 (DLPG), 145–148 (TKAD), and 178–180 (FSS). The Mg(2+) site is built by Ser40 and Thr62.

It belongs to the TRAFAC class TrmE-Era-EngA-EngB-Septin-like GTPase superfamily. EngB GTPase family. The cofactor is Mg(2+).

Functionally, necessary for normal cell division and for the maintenance of normal septation. The polypeptide is Probable GTP-binding protein EngB (Escherichia coli O6:H1 (strain CFT073 / ATCC 700928 / UPEC)).